An 89-amino-acid chain; its full sequence is Cytochrome c6 (89 aa).

The heme c site is built by Cys-15, Cys-18, His-19, and Met-61.

The protein belongs to the cytochrome c family. PetJ subfamily. Monomer. In terms of processing, binds 1 heme c group covalently per subunit.

It localises to the plastid. The protein localises to the chloroplast thylakoid lumen. Functions as an electron carrier between membrane-bound cytochrome b6-f and photosystem I in oxygenic photosynthesis. The sequence is that of Cytochrome c6 (petJ) from Chlorolobion braunii (Green alga).